We begin with the raw amino-acid sequence, 388 residues long: Pregnancy-associated glycoprotein (388 aa).

Residues 1–15 form the signal peptide; that stretch reads MKWFGVLGLVTLSEC. One can recognise a Peptidase A1 domain in the interval 74–385; sequence YMGIISVGTP…DRENDRIGLA (312 aa). Residue Asp-92 is part of the active site. Disulfide bonds link Cys-105–Cys-110 and Cys-266–Cys-270. The active site involves Asp-275. Cys-309 and Cys-344 are joined by a disulfide. A glycan (N-linked (GlcNAc...) asparagine) is linked at Asn-356.

This sequence belongs to the peptidase A1 family. In terms of tissue distribution, trophoblast and placental tissue.

The protein localises to the secreted. It is found in the extracellular space. This Equus caballus (Horse) protein is Pregnancy-associated glycoprotein (PAG).